We begin with the raw amino-acid sequence, 390 residues long: ATP-sensitive inward rectifier potassium channel 11 (390 aa).

Topologically, residues 1–65 (MLSRKGIIPE…LQDVFTTLVD (65 aa)) are cytoplasmic. Asparagine 48 and arginine 50 together coordinate ATP. Residues 66–92 (LKWTHTLLIFTMSFLCSWLLFAMVWWL) traverse the membrane as a helical segment. At 93–116 (IAFAHGDLAPGEGAAVPCVTSIHS) the chain is on the extracellular side. The cysteines at positions 110 and 142 are disulfide-linked. Residues 117-133 (FSSAFLFSIEVQVTIGF) constitute an intramembrane region (discontinuously helical; Pore-forming). Threonine 130 and phenylalanine 133 together coordinate K(+). The Selectivity filter signature appears at 130-135 (TIGFGG). Over 134–142 (GGRMVTEEC) the chain is Extracellular. The chain crosses the membrane as a helical span at residues 143 to 171 (PLAILILIVQNIVGLMINAIMLGCIFMKT). Topologically, residues 172 to 390 (AQAHRRAETL…KFSISPDSLS (219 aa)) are cytoplasmic. Arginine 176 serves as a coordination point for a 1,2-diacyl-sn-glycero-3-phospho-(1D-myo-inositol-4,5-bisphosphate). ATP is bound at residue tyrosine 330. Threonine 341 is subject to Phosphothreonine; by MAPK1. Phosphoserine; by MAPK1 is present on serine 385.

It belongs to the inward rectifier-type potassium channel (TC 1.A.2.1) family. KCNJ11 subfamily. Homotetramer; the homotetramer binds four ATP molecules (one ATP per subunit). Forms an heterooctamer with ABCC8/SUR1; one KCNJ11 homotetramer interacts with four ABCC8/SUR1 molecules. Interacts with ABCC9/SUR2. Phosphorylation by MAPK1 results in changes in channel gating that destabilize the closed states and reduce the ATP sensitivity.

Its subcellular location is the membrane. The catalysed reaction is K(+)(in) = K(+)(out). With respect to regulation, KATP channels are regulated by cytoplasmic ATP/ADP ratios; ATP inhibits the channel by closing the pore, while ADP activates the channel. Activated by phosphatidylinositol 4,5-biphosphate (PtdIns(4,5)P2). Its function is as follows. Inward rectifier potassium channel that forms the pore of ATP-sensitive potassium channels (KATP), regulating potassium permeability as a function of cytoplasmic ATP and ADP concentrations in many different cells. Inward rectifier potassium channels are characterized by a greater tendency to allow potassium to flow into the cell rather than out of it. Their voltage dependence is regulated by the concentration of extracellular potassium; as external potassium is raised, the voltage range of the channel opening shifts to more positive voltages. The inward rectification is mainly due to the blockage of outward current by internal magnesium. Can be blocked by extracellular barium. In pancreatic cells, it forms KATP channels with ABCC8/SUR1. Can form cardiac and smooth muscle-type KATP channels with ABCC9. The polypeptide is ATP-sensitive inward rectifier potassium channel 11 (KCNJ11) (Oryctolagus cuniculus (Rabbit)).